The sequence spans 320 residues: o-succinylbenzoate synthase (320 aa).

Lys-133 (proton donor) is an active-site residue. 3 residues coordinate Mg(2+): Asp-161, Glu-190, and Asp-213. Lys-235 (proton acceptor) is an active-site residue.

The protein belongs to the mandelate racemase/muconate lactonizing enzyme family. MenC type 1 subfamily. The cofactor is a divalent metal cation.

It catalyses the reaction (1R,6R)-6-hydroxy-2-succinyl-cyclohexa-2,4-diene-1-carboxylate = 2-succinylbenzoate + H2O. It functions in the pathway quinol/quinone metabolism; 1,4-dihydroxy-2-naphthoate biosynthesis; 1,4-dihydroxy-2-naphthoate from chorismate: step 4/7. It participates in quinol/quinone metabolism; menaquinone biosynthesis. Its function is as follows. Converts 2-succinyl-6-hydroxy-2,4-cyclohexadiene-1-carboxylate (SHCHC) to 2-succinylbenzoate (OSB). This Salmonella choleraesuis (strain SC-B67) protein is o-succinylbenzoate synthase.